The sequence spans 458 residues: Argininosuccinate lyase (458 aa).

This sequence belongs to the lyase 1 family. Argininosuccinate lyase subfamily.

It localises to the cytoplasm. The catalysed reaction is 2-(N(omega)-L-arginino)succinate = fumarate + L-arginine. The protein operates within amino-acid biosynthesis; L-arginine biosynthesis; L-arginine from L-ornithine and carbamoyl phosphate: step 3/3. This chain is Argininosuccinate lyase, found in Salmonella typhi.